A 258-amino-acid chain; its full sequence is MQENLKNDKLKIGKYEFDSRFILGSGKYSLELIKSAIEEAKAQIITLALRRANTGEIANILDYIPKNITLLPNTSGARNADEALRIARLSRELGCGELIKIEVISDSRYLLPDNYETIKACELLAKEGFTPLPYMHADLYAARAMRDAGAAAIMPLAAPIGSNKGLCAKEFIQILLNEIDLPIIVDAGIGSPSQACEAMQMGVSAVMVNTAIAEAKDIALMAKAFSLAVNAGRAAFLAGLASVSKAKASSPLTGFLRD.

The active-site Schiff-base intermediate with DXP is the K100. 1-deoxy-D-xylulose 5-phosphate is bound by residues G161, 187-188, and 209-210; these read AG and NT.

Belongs to the ThiG family. Homotetramer. Forms heterodimers with either ThiH or ThiS.

It localises to the cytoplasm. It catalyses the reaction [ThiS sulfur-carrier protein]-C-terminal-Gly-aminoethanethioate + 2-iminoacetate + 1-deoxy-D-xylulose 5-phosphate = [ThiS sulfur-carrier protein]-C-terminal Gly-Gly + 2-[(2R,5Z)-2-carboxy-4-methylthiazol-5(2H)-ylidene]ethyl phosphate + 2 H2O + H(+). It participates in cofactor biosynthesis; thiamine diphosphate biosynthesis. In terms of biological role, catalyzes the rearrangement of 1-deoxy-D-xylulose 5-phosphate (DXP) to produce the thiazole phosphate moiety of thiamine. Sulfur is provided by the thiocarboxylate moiety of the carrier protein ThiS. In vitro, sulfur can be provided by H(2)S. The chain is Thiazole synthase from Campylobacter jejuni subsp. jejuni serotype O:23/36 (strain 81-176).